The chain runs to 291 residues: ATP phosphoribosyltransferase 1 (291 aa).

The protein belongs to the ATP phosphoribosyltransferase family. Long subfamily. Mg(2+) is required as a cofactor.

The protein resides in the cytoplasm. It catalyses the reaction 1-(5-phospho-beta-D-ribosyl)-ATP + diphosphate = 5-phospho-alpha-D-ribose 1-diphosphate + ATP. The protein operates within amino-acid biosynthesis; L-histidine biosynthesis; L-histidine from 5-phospho-alpha-D-ribose 1-diphosphate: step 1/9. Feedback inhibited by histidine. Its function is as follows. Catalyzes the condensation of ATP and 5-phosphoribose 1-diphosphate to form N'-(5'-phosphoribosyl)-ATP (PR-ATP). Has a crucial role in the pathway because the rate of histidine biosynthesis seems to be controlled primarily by regulation of HisG enzymatic activity. The sequence is that of ATP phosphoribosyltransferase 1 from Geobacter sulfurreducens (strain ATCC 51573 / DSM 12127 / PCA).